The following is a 183-amino-acid chain: uncharacterized protein (183 aa).

It belongs to the Bcl-2 family.

This is an uncharacterized protein from Equine herpesvirus 2 (strain 86/87) (EHV-2).